The following is a 199-amino-acid chain: Guanylate kinase (199 aa).

The 180-residue stretch at 19–198 (VTVAVVSGPT…AVAHLVELLS (180 aa)) folds into the Guanylate kinase-like domain. 26 to 33 (GPTAVGKG) is an ATP binding site.

It belongs to the guanylate kinase family.

The protein localises to the cytoplasm. The enzyme catalyses GMP + ATP = GDP + ADP. Functionally, essential for recycling GMP and indirectly, cGMP. This Cutibacterium acnes (strain DSM 16379 / KPA171202) (Propionibacterium acnes) protein is Guanylate kinase.